Reading from the N-terminus, the 396-residue chain is ATP-dependent RNA helicase eIF4A (396 aa).

The Q motif motif lies at 22–50; it reads YSFDDLNLKPNIVRGIFGYGYESPSAIQQ. Residues 53-223 enclose the Helicase ATP-binding domain; it reads ILPITEGRDV…TKFMNNPVRI (171 aa). An ATP-binding site is contributed by 66-73; sequence AQSGTGKT. The DEAD box motif lies at 171 to 174; it reads DEAD. Residues 234 to 395 form the Helicase C-terminal domain; that stretch reads GIKQFYINVE…EMPANIGELF (162 aa).

Belongs to the DEAD box helicase family. eIF4A subfamily. In terms of assembly, component of the eIF4F complex, which composition varies with external and internal environmental conditions. It is composed of at least eIF4A, eIF4E and eIF4G.

It localises to the cytoplasm. It catalyses the reaction ATP + H2O = ADP + phosphate + H(+). Functionally, ATP-dependent RNA helicase which is a subunit of the eIF4F complex involved in cap recognition and is required for mRNA binding to ribosome. In the current model of translation initiation, eIF4A unwinds RNA secondary structures in the 5'-UTR of mRNAs which is necessary to allow efficient binding of the small ribosomal subunit, and subsequent scanning for the initiator codon. The polypeptide is ATP-dependent RNA helicase eIF4A (TIF1) (Meyerozyma guilliermondii (strain ATCC 6260 / CBS 566 / DSM 6381 / JCM 1539 / NBRC 10279 / NRRL Y-324) (Yeast)).